The following is a 147-amino-acid chain: Lysozyme C (147 aa).

The first 18 residues, 1-18, serve as a signal peptide directing secretion; the sequence is MKFFLILGFCLLPLIAQG. The C-type lysozyme domain occupies 19 to 147; it reads KVFQRCELAA…VSQWIRGCRV (129 aa). Intrachain disulfides connect Cys-24–Cys-145, Cys-48–Cys-133, Cys-82–Cys-98, and Cys-94–Cys-112. Catalysis depends on residues Glu-53 and Asp-70. Asp-119 contacts substrate.

Belongs to the glycosyl hydrolase 22 family. Monomer. As to expression, expressed in liver and ovary. Not expressed in bone marrow, lung, spleen, intestine or oviduct.

The protein localises to the secreted. It carries out the reaction Hydrolysis of (1-&gt;4)-beta-linkages between N-acetylmuramic acid and N-acetyl-D-glucosamine residues in a peptidoglycan and between N-acetyl-D-glucosamine residues in chitodextrins.. Lysozymes have primarily a bacteriolytic function; those in tissues and body fluids are associated with the monocyte-macrophage system and enhance the activity of immunoagents. Has bacteriolytic activity against M.luteus. The polypeptide is Lysozyme C (Dromaius novaehollandiae (Emu)).